The sequence spans 325 residues: Tetraacyldisaccharide 4'-kinase (325 aa).

55–62 (TAGGNGKT) provides a ligand contact to ATP.

It belongs to the LpxK family.

It catalyses the reaction a lipid A disaccharide + ATP = a lipid IVA + ADP + H(+). It participates in glycolipid biosynthesis; lipid IV(A) biosynthesis; lipid IV(A) from (3R)-3-hydroxytetradecanoyl-[acyl-carrier-protein] and UDP-N-acetyl-alpha-D-glucosamine: step 6/6. In terms of biological role, transfers the gamma-phosphate of ATP to the 4'-position of a tetraacyldisaccharide 1-phosphate intermediate (termed DS-1-P) to form tetraacyldisaccharide 1,4'-bis-phosphate (lipid IVA). The protein is Tetraacyldisaccharide 4'-kinase of Salmonella arizonae (strain ATCC BAA-731 / CDC346-86 / RSK2980).